The following is a 43-amino-acid chain: MLTALGQVNNIQKEFTIKKTKQADHNLVARIDEIQYVQGTINL.

This is an uncharacterized protein from Homo sapiens (Human).